The primary structure comprises 239 residues: ATP synthase subunit a, chloroplastic (239 aa).

5 helical membrane passes run 30–50, 87–107, 126–146, 191–211, and 212–232; these read VLLV…LGTF, VPFI…GALV, INTT…AGLS, LVVA…VMVL, and GLFA…SYIG.

The protein belongs to the ATPase A chain family. F-type ATPases have 2 components, CF(1) - the catalytic core - and CF(0) - the membrane proton channel. CF(1) has five subunits: alpha(3), beta(3), gamma(1), delta(1), epsilon(1). CF(0) has four main subunits: a, b, b' and c.

Its subcellular location is the plastid. The protein localises to the chloroplast thylakoid membrane. In terms of biological role, key component of the proton channel; it plays a direct role in the translocation of protons across the membrane. In Cyanidium caldarium (Red alga), this protein is ATP synthase subunit a, chloroplastic.